Reading from the N-terminus, the 319-residue chain is Probable cell division protein WhiA (319 aa).

A DNA-binding region (H-T-H motif) is located at residues 278-311; it reads SLKELGQMLNPPVGKSGVNHRLRRLESLAEAFSR.

The protein belongs to the WhiA family.

Its function is as follows. Involved in cell division and chromosome segregation. The sequence is that of Probable cell division protein WhiA from Heliobacterium modesticaldum (strain ATCC 51547 / Ice1).